Reading from the N-terminus, the 276-residue chain is ATP synthase subunit a 2 (276 aa).

Helical transmembrane passes span alanine 45–phenylalanine 65, valine 105–leucine 125, valine 154–isoleucine 173, leucine 226–tryptophan 246, and alanine 247–valine 267.

The protein belongs to the ATPase A chain family. F-type ATPases have 2 components, CF(1) - the catalytic core - and CF(0) - the membrane proton channel. CF(1) has five subunits: alpha(3), beta(3), gamma(1), delta(1), epsilon(1). CF(0) has three main subunits: a(1), b(2) and c(9-12). The alpha and beta chains form an alternating ring which encloses part of the gamma chain. CF(1) is attached to CF(0) by a central stalk formed by the gamma and epsilon chains, while a peripheral stalk is formed by the delta and b chains.

It localises to the cell inner membrane. Key component of the proton channel; it plays a direct role in the translocation of protons across the membrane. This is ATP synthase subunit a 2 from Hahella chejuensis (strain KCTC 2396).